The following is a 380-amino-acid chain: DNA-directed RNA polymerase subunit Rpo1C (380 aa).

It belongs to the RNA polymerase beta' chain family. In terms of assembly, part of the RNA polymerase complex.

The protein localises to the cytoplasm. It carries out the reaction RNA(n) + a ribonucleoside 5'-triphosphate = RNA(n+1) + diphosphate. Functionally, DNA-dependent RNA polymerase (RNAP) catalyzes the transcription of DNA into RNA using the four ribonucleoside triphosphates as substrates. Forms part of the jaw domain. The chain is DNA-directed RNA polymerase subunit Rpo1C from Archaeoglobus fulgidus (strain ATCC 49558 / DSM 4304 / JCM 9628 / NBRC 100126 / VC-16).